We begin with the raw amino-acid sequence, 384 residues long: S-adenosylmethionine synthase (384 aa).

Residue H15 participates in ATP binding. D17 contacts Mg(2+). E43 is a K(+) binding site. E56 and Q99 together coordinate L-methionine. The tract at residues 99–109 (QSPDINQGVDR) is flexible loop. Residues 164–166 (DAK), 230–231 (RF), D239, 245–246 (RK), A262, and K266 contribute to the ATP site. An L-methionine-binding site is contributed by D239. Residue K270 coordinates L-methionine.

It belongs to the AdoMet synthase family. As to quaternary structure, homotetramer; dimer of dimers. It depends on Mg(2+) as a cofactor. K(+) serves as cofactor.

It localises to the cytoplasm. The enzyme catalyses L-methionine + ATP + H2O = S-adenosyl-L-methionine + phosphate + diphosphate. It functions in the pathway amino-acid biosynthesis; S-adenosyl-L-methionine biosynthesis; S-adenosyl-L-methionine from L-methionine: step 1/1. Functionally, catalyzes the formation of S-adenosylmethionine (AdoMet) from methionine and ATP. The overall synthetic reaction is composed of two sequential steps, AdoMet formation and the subsequent tripolyphosphate hydrolysis which occurs prior to release of AdoMet from the enzyme. The sequence is that of S-adenosylmethionine synthase from Salmonella agona (strain SL483).